The following is a 1162-amino-acid chain: Reticulon-4 (1162 aa).

Methionine 1 is modified (N-acetylmethionine). Positions 1-183 (MEDIDQSSLV…ALPAASEPVI (183 aa)) are disordered. At 1-988 (MEDIDQSSLV…LYWRDIKKTG (988 aa)) the chain is on the cytoplasmic side. Phosphoserine is present on residues serine 7 and serine 16. Low complexity predominate over residues 7 to 16 (SSLVSSSADS). Residues 31 to 54 (EPEDEEDEEDEEEEEDDEDLEELE) show a composition bias toward acidic residues. Residues 85 to 99 (PPAPRGPLPAAPPTA) are compositionally biased toward pro residues. Serine 105 bears the Phosphoserine mark. The segment covering 109–127 (SPAASAPSLPPAAAVLPSK) has biased composition (low complexity). Phosphoserine occurs at positions 145, 165, 167, 329, and 344. Threonine 348 carries the phosphothreonine modification. Basic and acidic residues predominate over residues 408 to 422 (SLEQKGHGKDSESRN). Residues 408–432 (SLEQKGHGKDSESRNENASFPRTPE) form a disordered region. Serine 426 is modified (phosphoserine). The residue at position 430 (threonine 430) is a Phosphothreonine. Serine 489, serine 690, serine 727, serine 768, and serine 832 each carry phosphoserine. The tract at residues 711-730 (ELVDDSSPESEPVDLFSDDS) is disordered. The segment covering 713–730 (VDDSSPESEPVDLFSDDS) has biased composition (acidic residues). A Phosphothreonine modification is found at threonine 834. Phosphoserine occurs at positions 857 and 961. Residues 975-1162 (VVDLLYWRDI…KIPGLKRKAE (188 aa)) form the Reticulon domain. A helical membrane pass occupies residues 989–1009 (VVFGASLFLLLSLTVFSIVSV). The Lumenal portion of the chain corresponds to 1010 to 1078 (TAYIALALLS…VNSTIKELRR (69 aa)). Residue lysine 1074 is modified to N6-acetyllysine. The helical transmembrane segment at 1079–1099 (LFLVDDLVDSLKFAVLMWVFT) threads the bilayer. The Cytoplasmic segment spans residues 1100–1162 (YVGALFNGLT…KIPGLKRKAE (63 aa)).

In terms of assembly, binds to RTN4R. Interacts with ATL1. Interacts with TMEM170A. Interacts with RTN4IP1. Interacts in trans with CNTNAP1. Interacts with REEP5. Interacts with GPR50. Interacts with synaptic plasticity regulator PANTS; the interaction results in enhanced RTN4-mediated inhibition of AMPA receptor clustering. As to quaternary structure, homodimer. Interacts with BAD/Bcl-xl and BCL2. Interact with RTN3. Interacts with NGBR. Interacts with SPTLC1. Interacts with GRAMD4. Interacts with CDH5. Interacts with BACE1 and BACE2. Interacts with REEP5. Interacts with RETREG3. In terms of assembly, interacts with BACE1 and BACE2. Interacts with TMEM33. In terms of tissue distribution, expressed in cardiomyocytes (at protein level). Highly expressed in brain but not deteceted in aorta, femoral and carotid arteries. Main isoform expressed in neurons. Expressed in cardiomyocytes (at protein level). Expressed in splenocytes, T-cells, B-cells, bone marrow derived dendritic cells and macrophages (at protein level). Expressed in neurons. Highly expressed in endothelial cells and vascular smooth muscle cells, including blood vessels and mesenteric arteries. Expressed in bronchial and alveolar epithelial cells as well as vascular endothelial cells of lungs. As to expression, expressed in B-cells, bone marrow dendritic cells and macrophages (at protein level). In terms of tissue distribution, expressed in cardiomyocytes. Expressed at very low levels in neurons.

It localises to the endoplasmic reticulum membrane. The protein resides in the cell membrane. It is found in the synapse. The protein localises to the cell junction. Required to induce the formation and stabilization of endoplasmic reticulum (ER) tubules. They regulate membrane morphogenesis in the ER by promoting tubular ER production. They influence nuclear envelope expansion, nuclear pore complex formation and proper localization of inner nuclear membrane proteins. However each isoform have specific functions mainly depending on their tissue expression specificities. In terms of biological role, developmental neurite growth regulatory factor with a role as a negative regulator of axon-axon adhesion and growth, and as a facilitator of neurite branching. Regulates neurite fasciculation, branching and extension in the developing nervous system. Involved in down-regulation of growth, stabilization of wiring and restriction of plasticity in the adult CNS. Regulates the radial migration of cortical neurons via an RTN4R-LINGO1 containing receptor complex. Acts as a negative regulator of central nervous system angiogenesis. Inhibits spreading, migration and sprouting of primary brain microvascular endothelial cells (MVECs). Also induces the retraction of MVECs lamellipodia and filopodia in a ROCK pathway-dependent manner. Its function is as follows. Mainly function in endothelial cells and vascular smooth muscle cells, is also involved in immune system regulation. Modulator of vascular remodeling, promotes the migration of endothelial cells but inhibits the migration of vascular smooth muscle cells. Regulates endothelial sphingolipid biosynthesis with direct effects on vascular function and blood pressure. Inhibits serine palmitoyltransferase, SPTLC1, the rate-limiting enzyme of the novo sphingolipid biosynthetic pathway, thereby controlling production of endothelial sphingosine-1-phosphate (S1P). Required to promote macrophage homing and functions such as cytokine/chemokine gene expression involved in angiogenesis, arteriogenesis and tissue repair. Mediates ICAM1 induced transendothelial migration of leukocytes such as monocytes and neutrophils and acute inflammation. Necessary for immune responses triggered by nucleic acid sensing TLRs, such as TLR9, is required for proper TLR9 location to endolysosomes. Also involved in immune response to LPS. Plays a role in liver regeneration through the modulation of hepatocytes proliferation. Reduces the anti-apoptotic activity of Bcl-xl and Bcl-2. This is likely consecutive to their change in subcellular location, from the mitochondria to the endoplasmic reticulum, after binding and sequestration. With isoform C, inhibits BACE1 activity and amyloid precursor protein processing. Functionally, regulates cardiomyocyte apoptosis upon hypoxic conditions. With isoform B, inhibits BACE1 activity and amyloid precursor protein processing. In Mus musculus (Mouse), this protein is Reticulon-4.